A 218-amino-acid polypeptide reads, in one-letter code: 3,4-dihydroxy-2-butanone 4-phosphate synthase (218 aa).

Residues 38 to 39, Asp43, 151 to 155, and Glu175 each bind D-ribulose 5-phosphate; these read RE and RRGHT. Mg(2+) is bound at residue Glu39. His154 contacts Mg(2+).

The protein belongs to the DHBP synthase family. Homodimer. The cofactor is Mg(2+). It depends on Mn(2+) as a cofactor.

It carries out the reaction D-ribulose 5-phosphate = (2S)-2-hydroxy-3-oxobutyl phosphate + formate + H(+). It functions in the pathway cofactor biosynthesis; riboflavin biosynthesis; 2-hydroxy-3-oxobutyl phosphate from D-ribulose 5-phosphate: step 1/1. Catalyzes the conversion of D-ribulose 5-phosphate to formate and 3,4-dihydroxy-2-butanone 4-phosphate. This Vibrio cholerae serotype O1 (strain ATCC 39541 / Classical Ogawa 395 / O395) protein is 3,4-dihydroxy-2-butanone 4-phosphate synthase.